The chain runs to 90 residues: Putative cytochrome c oxidase subunit 5b-like (90 aa).

Zn(2+)-binding residues include cysteine 43, cysteine 67, and cysteine 70.

This sequence belongs to the cytochrome c oxidase subunit 5B (TC 3.D.4.11) family.

The sequence is that of Putative cytochrome c oxidase subunit 5b-like from Arabidopsis thaliana (Mouse-ear cress).